Consider the following 340-residue polypeptide: Cathepsin B (340 aa).

The signal sequence occupies residues 1–17; it reads MSWSRSILCLLGAFANA. Residues 18 to 79 constitute a propeptide, activation peptide; it reads RSIPYYPPLS…ERVDFAEDMD (62 aa). A glycan (N-linked (GlcNAc...) asparagine) is linked at asparagine 38. Cystine bridges form between cysteine 93–cysteine 122, cysteine 105–cysteine 150, cysteine 141–cysteine 208, cysteine 142–cysteine 146, cysteine 179–cysteine 212, and cysteine 187–cysteine 198. Residue cysteine 108 is part of the active site. Asparagine 192 is a glycosylation site (N-linked (GlcNAc...) asparagine). Catalysis depends on residues histidine 279 and asparagine 299.

The protein belongs to the peptidase C1 family. As to quaternary structure, dimer of a heavy chain and a light chain cross-linked by a disulfide bond.

The protein localises to the lysosome. It carries out the reaction Hydrolysis of proteins with broad specificity for peptide bonds. Preferentially cleaves -Arg-Arg-|-Xaa bonds in small molecule substrates (thus differing from cathepsin L). In addition to being an endopeptidase, shows peptidyl-dipeptidase activity, liberating C-terminal dipeptides.. Thiol protease which is believed to participate in intracellular degradation and turnover of proteins. Has also been implicated in tumor invasion and metastasis. This Gallus gallus (Chicken) protein is Cathepsin B (CTSB).